Consider the following 182-residue polypeptide: Protein LIGHT-DEPENDENT SHORT HYPOCOTYLS 5 (182 aa).

Positions 1-16 are enriched in low complexity; the sequence is MEGETAAKAAASSSSS. 2 disordered regions span residues 1–22 and 138–168; these read MEGE…RYES and ARGI…DAEG. In terms of domain architecture, ALOG spans 19–147; it reads RYESQKRRDW…ARGIPYDKKK (129 aa). The Nuclear localization signal signature appears at 145–149; the sequence is KKKRK.

The protein belongs to the plant homeotic and developmental regulators ALOG protein family.

It localises to the nucleus. Probable transcription regulator that acts as a developmental regulator by promoting cell growth in response to light. This chain is Protein LIGHT-DEPENDENT SHORT HYPOCOTYLS 5 (LSH5), found in Arabidopsis thaliana (Mouse-ear cress).